A 396-amino-acid chain; its full sequence is Small ribosomal subunit protein uS9m (396 aa).

An N6-acetyllysine modification is found at Lys287. The tract at residues 374-396 (PRVRERKKPGQEGARRKFTWKKR) is disordered.

It belongs to the universal ribosomal protein uS9 family. In terms of assembly, component of the mitochondrial small ribosomal subunit (mt-SSU). Mature mammalian 55S mitochondrial ribosomes consist of a small (28S) and a large (39S) subunit. The 28S small subunit contains a 12S ribosomal RNA (12S mt-rRNA) and 30 different proteins. The 39S large subunit contains a 16S rRNA (16S mt-rRNA), a copy of mitochondrial valine transfer RNA (mt-tRNA(Val)), which plays an integral structural role, and 52 different proteins.

Its subcellular location is the mitochondrion. The chain is Small ribosomal subunit protein uS9m (MRPS9) from Homo sapiens (Human).